Reading from the N-terminus, the 632-residue chain is CREB-regulated transcription coactivator 3 (632 aa).

At Ser66 the chain carries Phosphoserine. Basic residues predominate over residues 105 to 115 (NRLHSSHHRPV). The tract at residues 105 to 156 (NRLHSSHHRPVEKHGRQCDSSPYGSVYLSPPPDNNWRRTNSDSALHTSASSS) is disordered. The residue at position 133 (Ser133) is a Phosphoserine. Position 145 is a phosphoserine; by SIK2 (Ser145). A compositionally biased stretch (low complexity) spans 145-156 (SDSALHTSASSS). The residue at position 151 (Thr151) is a Phosphothreonine. Residue Ser293 is modified to Phosphoserine. A compositionally biased stretch (polar residues) spans 310–338 (GIQNTCSNPSIQATMNNNVNNHTPPGRNN). Positions 310–455 (GIQNTCSNPS…ESQNFQPPSP (146 aa)) are disordered. Low complexity predominate over residues 339 to 360 (PTLHPSLRLSSLSNPSLPTSAL). Ser372 and Ser391 each carry phosphoserine. Polar residues predominate over residues 372-405 (SPLTLTPGSESNRSISNQFSPTSPMDMLPNSQGV). The segment covering 413–424 (SLPPLEPPPPYP) has biased composition (pro residues). Residues 425–440 (LYTDQPQPQLHHTQQQ) are compositionally biased toward low complexity. At Ser556 the chain carries Phosphoserine.

This sequence belongs to the TORC family. Binding, as a tetramer, through its N-terminal region, with the bZIP domain of creb1 enhances recruitment of taf4 to the promoter. 'Arg-300' in the bZIP domain of creb1 is essential for this interaction.

The protein localises to the nucleus. It is found in the cytoplasm. Its function is as follows. Transcriptional coactivator for creb1 which activates transcription through both consensus and variant cAMP response element (CRE) sites. Acts as a coactivator, in the SIK/TORC signaling pathway, being active when dephosphorylated and acts independently of creb1 'Ser-119' phosphorylation. Enhances the interaction of creb1 with taf4. Regulates the expression of specific CREB-activated genes such as the steroidogenic gene, StAR. Potent coactivator of ppargc1a and inducer of mitochondrial biogenesis in muscle cells. The chain is CREB-regulated transcription coactivator 3 (crtc3) from Xenopus laevis (African clawed frog).